Consider the following 391-residue polypeptide: Putative ABC transporter glucose-binding protein TsgA13 (391 aa).

Residues 1-28 (MLDEESSIQRRDVLSALGAAGVTTLAGC) form the signal peptide. The disordered stretch occupies residues 24 to 71 (TLAGCTGGDTGDTDDTEASETTASEGTTSGTTTGDVETTDGGGPSEGE). The segment covering 42–59 (SETTASEGTTSGTTTGDV) has biased composition (low complexity).

This sequence belongs to the BMP lipoprotein family. The complex is composed of two ATP-binding proteins (TsgD13), two transmembrane proteins (TsgB13 and TsgC13) and a solute-binding protein (TsgA13).

Functionally, part of an ABC transporter complex involved in glucose import. The polypeptide is Putative ABC transporter glucose-binding protein TsgA13 (tsgA13) (Haloferax volcanii (strain ATCC 29605 / DSM 3757 / JCM 8879 / NBRC 14742 / NCIMB 2012 / VKM B-1768 / DS2) (Halobacterium volcanii)).